Here is an 883-residue protein sequence, read N- to C-terminus: DNA topoisomerase 1 (883 aa).

A Toprim domain is found at 2 to 126 (PKLVIVESPT…TKRMVFHEIT (125 aa)). Mg(2+)-binding residues include Glu8 and Asp95. One can recognise a Topo IA-type catalytic domain in the interval 141–583 (DQRLVHAQET…QFYRGDRGLE (443 aa)). Positions 175–180 (SAGRVQ) are interaction with DNA. Residues 271-294 (SLEEKPTTRKPAPPFTTSTLQQES) form a disordered region. The active-site O-(5'-phospho-DNA)-tyrosine intermediate is the Tyr320. A disordered region spans residues 842 to 883 (AKAGQAKAKGGRRSTGTPKSGETKARTTKTTKKTTTRRTTSR). Basic residues predominate over residues 867 to 883 (RTTKTTKKTTTRRTTSR).

The protein belongs to the type IA topoisomerase family. Monomer. It depends on Mg(2+) as a cofactor.

It catalyses the reaction ATP-independent breakage of single-stranded DNA, followed by passage and rejoining.. Releases the supercoiling and torsional tension of DNA, which is introduced during the DNA replication and transcription, by transiently cleaving and rejoining one strand of the DNA duplex. Introduces a single-strand break via transesterification at a target site in duplex DNA. The scissile phosphodiester is attacked by the catalytic tyrosine of the enzyme, resulting in the formation of a DNA-(5'-phosphotyrosyl)-enzyme intermediate and the expulsion of a 3'-OH DNA strand. The free DNA strand then undergoes passage around the unbroken strand, thus removing DNA supercoils. Finally, in the religation step, the DNA 3'-OH attacks the covalent intermediate to expel the active-site tyrosine and restore the DNA phosphodiester backbone. The chain is DNA topoisomerase 1 from Synechococcus elongatus (strain ATCC 33912 / PCC 7942 / FACHB-805) (Anacystis nidulans R2).